Here is a 1396-residue protein sequence, read N- to C-terminus: Sterol 3-beta-glucosyltransferase (1396 aa).

Residues 1–16 (MRPLLDEAKRRVDRRL) show a composition bias toward basic and acidic residues. 3 disordered regions span residues 1 to 59 (MRPL…TKEG), 82 to 193 (HARF…AAPV), and 206 to 233 (SKGS…TSAS). Residues 18–28 (ASRQSLSTSRI) are compositionally biased toward polar residues. 2 stretches are compositionally biased toward basic and acidic residues: residues 35–44 (ERLKDDHDAQ) and 82–108 (HARF…KESQ). Over residues 156 to 175 (GSSQRQGGAQTEPSTGNQMS) the composition is skewed to polar residues. A GRAM 1 domain is found at 237–288 (LRLMEMFGFESPEKVLVEYACSLVQSMLLQGYMYVTEGHICFYAYLPRKSTV). A PH domain is found at 289–387 (AIKSGYLYKR…WVKSLQKVIF (99 aa)). Polar residues-rich tracts occupy residues 459-479 (QAKN…QSRA) and 487-497 (SLTSGLSQVLG). Disordered stretches follow at residues 459–531 (QAKN…RDLS) and 576–635 (FRRQ…VQQS). Residues 585–595 (QFGRRHSDETA) are compositionally biased toward basic and acidic residues. Positions 719-785 (DRFRAHFALP…KDVENVEKEK (67 aa)) constitute a GRAM 2 domain. A disordered region spans residues 841-880 (EQDESEAAKAEHRMLQEARKDASGGLIPQTPSDESPEIHP). Over residues 846–862 (EAAKAEHRMLQEARKDA) the composition is skewed to basic and acidic residues. UDP-alpha-D-glucose is bound by residues Ser-907, Arg-908, Asp-910, Ala-1210, His-1212, His-1225, Gly-1229, Thr-1230, Asp-1249, and Gln-1250.

It belongs to the glycosyltransferase 28 family.

Its subcellular location is the cytoplasm. It localises to the preautophagosomal structure membrane. The catalysed reaction is a sterol + UDP-alpha-D-glucose = a sterol 3-beta-D-glucoside + UDP + H(+). It carries out the reaction ergosterol + UDP-alpha-D-glucose = ergosteryl 3-beta-D-glucoside + UDP + H(+). Functionally, sterol glycosyltransferase responsible for the glycosylation of ergosterol to form ergosterol-glucoside. The protein is Sterol 3-beta-glucosyltransferase of Aspergillus terreus (strain NIH 2624 / FGSC A1156).